Consider the following 84-residue polypeptide: Envelope glycoprotein N (84 aa).

The signal sequence occupies residues 1-26 (MSCKKSARQSLYVSLCLFYILVFAAA). Topologically, residues 27 to 47 (TEVDFYSPECHSHTYEIVLNS) are virion surface. A helical transmembrane segment spans residues 48-68 (FSSIWLLINLFLLLCSFAIFL). The Intravirion segment spans residues 69 to 84 (KYWCYKTFASETVKGY).

This sequence belongs to the herpesviridae glycoprotein N family. As to quaternary structure, interacts (via N-terminus) with gM (via N-terminus). The gM-gN heterodimer forms the gCII complex.

Its subcellular location is the virion membrane. It is found in the host membrane. The protein resides in the host Golgi apparatus. It localises to the host trans-Golgi network. Functionally, envelope glycoprotein necessary for proper maturation of gM and modulation of its membrane fusion activity. Also plays a critical role in virion morphogenesis. In Homo sapiens (Human), this protein is Envelope glycoprotein N.